Here is a 338-residue protein sequence, read N- to C-terminus: Nodulation outer protein L (338 aa).

The span at 1–14 (MDINSTSPLNASPQ) shows a compositional bias: polar residues. Disordered stretches follow at residues 1-48 (MDIN…LPQV), 85-158 (TRER…DLET), 187-209 (SPAP…PHAR), and 230-259 (PQAG…SSAG). The span at 85–97 (TRERSPHPSEQRP) shows a compositional bias: basic and acidic residues. The segment covering 126 to 138 (VGPSRSGPSQAGL) has biased composition (polar residues). Residues 242–258 (SGPSQARPSHAWPSSSA) show a composition bias toward polar residues.

It localises to the secreted. Functionally, putative symbiotic effector that modulates nodulation in legumes. When delivered into the plant cell, modulates the activity of signal transduction pathways that culminate in activation of PR proteins. The protein is Nodulation outer protein L (nopL) of Sinorhizobium fredii (strain NBRC 101917 / NGR234).